A 350-amino-acid polypeptide reads, in one-letter code: tRNA uridine(34) hydroxylase (350 aa).

The Rhodanese domain maps to 146 to 240 (DDPDALFIDM…YARKAREQGL (95 aa)). Cys-200 acts as the Cysteine persulfide intermediate in catalysis.

Belongs to the TrhO family.

It carries out the reaction uridine(34) in tRNA + AH2 + O2 = 5-hydroxyuridine(34) in tRNA + A + H2O. Functionally, catalyzes oxygen-dependent 5-hydroxyuridine (ho5U) modification at position 34 in tRNAs, the first step in 5-carboxymethoxyuridine (cmo5U) biosynthesis. May be part of an alternate pathway, which is able to bypass cmo5U biogenesis in a subset of tRNAs under aerobic conditions. This chain is tRNA uridine(34) hydroxylase, found in Escherichia coli O45:K1 (strain S88 / ExPEC).